The following is a 101-amino-acid chain: NADH-quinone oxidoreductase subunit K 1 (101 aa).

3 consecutive transmembrane segments (helical) span residues 4-24, 31-51, and 64-84; these read IGTM…TVGV, VVIL…LVAF, and IFVM…VIAF.

The protein belongs to the complex I subunit 4L family. In terms of assembly, NDH-1 is composed of 14 different subunits. Subunits NuoA, H, J, K, L, M, N constitute the membrane sector of the complex.

The protein localises to the cell inner membrane. It carries out the reaction a quinone + NADH + 5 H(+)(in) = a quinol + NAD(+) + 4 H(+)(out). Its function is as follows. NDH-1 shuttles electrons from NADH, via FMN and iron-sulfur (Fe-S) centers, to quinones in the respiratory chain. The immediate electron acceptor for the enzyme in this species is believed to be ubiquinone. Couples the redox reaction to proton translocation (for every two electrons transferred, four hydrogen ions are translocated across the cytoplasmic membrane), and thus conserves the redox energy in a proton gradient. This chain is NADH-quinone oxidoreductase subunit K 1, found in Koribacter versatilis (strain Ellin345).